A 453-amino-acid polypeptide reads, in one-letter code: Na(+)/H(+) antiporter NhaA (453 aa).

11 consecutive transmembrane segments (helical) span residues 28 to 48 (FLHIEAFSGVVLLLAAAAALI), 79 to 99 (LHFLINDGLMTIFFLVVGMEI), 115 to 135 (ALPLAAALGGVVVPALIYFIL), 144 to 164 (GWAVPTATDIAFAVGVLALLG), 173 to 193 (VFLLALAIIDDIVAVLIIAVF), 196 to 216 (GGMDYSGFIIAAVGILMVLGM), 241 to 261 (TGAHPTLAGVVLGLMTPVFAP), 321 to 341 (VAFGIMPLFALANAGVSLDGI), 355 to 375 (VLIALVAGKPLGIIGASFLMV), 393 to 413 (LVGLLAGIGFTMSIFIATLAF), and 424 to 444 (LGILLASLSAAVLGLAWGFFQ).

The protein belongs to the NhaA Na(+)/H(+) (TC 2.A.33) antiporter family.

It is found in the cell inner membrane. It carries out the reaction Na(+)(in) + 2 H(+)(out) = Na(+)(out) + 2 H(+)(in). Na(+)/H(+) antiporter that extrudes sodium in exchange for external protons. The protein is Na(+)/H(+) antiporter NhaA of Janthinobacterium sp. (strain Marseille) (Minibacterium massiliensis).